A 415-amino-acid polypeptide reads, in one-letter code: uncharacterized protein (415 aa).

In terms of domain architecture, TRAM spans 1 to 52; sequence MQDLTINAIGAQGDGLARTADGKPAFVPLTLPGEVVRAKMDGARGEVVEILA. Residues C62, C68, C71, and C147 each coordinate [4Fe-4S] cluster. S-adenosyl-L-methionine-binding residues include Q252, Y279, E299, and D347. Residue C373 is the Nucleophile of the active site.

This sequence belongs to the class I-like SAM-binding methyltransferase superfamily. RNA M5U methyltransferase family.

This is an uncharacterized protein from Caulobacter vibrioides (strain ATCC 19089 / CIP 103742 / CB 15) (Caulobacter crescentus).